Reading from the N-terminus, the 242-residue chain is ATP-dependent dethiobiotin synthetase BioD (242 aa).

ATP is bound at residue 12-17 (EVGKTV). Threonine 16 lines the Mg(2+) pocket. Residue lysine 37 is part of the active site. Residue serine 41 participates in substrate binding. Residues aspartate 51 and 112–115 (EGAG) each bind ATP. Aspartate 51 and glutamate 112 together coordinate Mg(2+).

The protein belongs to the dethiobiotin synthetase family. As to quaternary structure, homodimer. The cofactor is Mg(2+).

It is found in the cytoplasm. It catalyses the reaction (7R,8S)-7,8-diammoniononanoate + CO2 + ATP = (4R,5S)-dethiobiotin + ADP + phosphate + 3 H(+). It participates in cofactor biosynthesis; biotin biosynthesis; biotin from 7,8-diaminononanoate: step 1/2. Functionally, catalyzes a mechanistically unusual reaction, the ATP-dependent insertion of CO2 between the N7 and N8 nitrogen atoms of 7,8-diaminopelargonic acid (DAPA, also called 7,8-diammoniononanoate) to form a ureido ring. This Bacillus thuringiensis subsp. konkukian (strain 97-27) protein is ATP-dependent dethiobiotin synthetase BioD.